The chain runs to 216 residues: Protein-methionine-sulfoxide reductase heme-binding subunit MsrQ (216 aa).

The next 5 helical transmembrane spans lie at 16–36, 48–68, 82–102, 119–139, and 155–175; these read IWAL…LGAT, EHLL…ITPI, ALGL…MVLD, FITI…TSNI, and LVYV…KVVG.

Belongs to the MsrQ family. Heterodimer of a catalytic subunit (MsrP) and a heme-binding subunit (MsrQ). It depends on FMN as a cofactor. Heme b is required as a cofactor.

The protein resides in the cell inner membrane. Functionally, part of the MsrPQ system that repairs oxidized periplasmic proteins containing methionine sulfoxide residues (Met-O), using respiratory chain electrons. Thus protects these proteins from oxidative-stress damage caused by reactive species of oxygen and chlorine generated by the host defense mechanisms. MsrPQ is essential for the maintenance of envelope integrity under bleach stress, rescuing a wide series of structurally unrelated periplasmic proteins from methionine oxidation. MsrQ provides electrons for reduction to the reductase catalytic subunit MsrP, using the quinone pool of the respiratory chain. This chain is Protein-methionine-sulfoxide reductase heme-binding subunit MsrQ, found in Rhizobium meliloti (strain 1021) (Ensifer meliloti).